Reading from the N-terminus, the 559-residue chain is DnaJ homolog subfamily C member 11 (559 aa).

The residue at position 2 (Ala-2) is an N-acetylalanine. The J domain maps to 14 to 82 (DYYSLLNVRR…QTRAIYDIYG (69 aa)). Position 204 is a phosphoserine (Ser-204). The stretch at 415-457 (QKEKELEKQRENTASDILQKKQEAEAAVRLMQESVRRIIEAEE) forms a coiled coil.

This sequence belongs to the DNAJC11 family. Associates with the mitochondrial contact site and cristae organizing system (MICOS) complex, composed of at least MICOS10/MIC10, CHCHD3/MIC19, CHCHD6/MIC25, APOOL/MIC27, IMMT/MIC60, APOO/MIC23/MIC26 and QIL1/MIC13. This complex was also known under the names MINOS or MitOS complex. The MICOS complex associates with mitochondrial outer membrane proteins SAMM50, MTX1 and MTX2 (together described as components of the mitochondrial outer membrane sorting assembly machinery (SAM) complex) and DNAJC11, mitochondrial inner membrane protein TMEM11 and with HSPA9. The MICOS and SAM complexes together with DNAJC11 are part of a large protein complex spanning both membranes termed the mitochondrial intermembrane space bridging (MIB) complex.

It localises to the mitochondrion. The protein resides in the mitochondrion outer membrane. Required for mitochondrial inner membrane organization. Seems to function through its association with the MICOS complex and the mitochondrial outer membrane sorting assembly machinery (SAM) complex. This is DnaJ homolog subfamily C member 11 (Dnajc11) from Mus musculus (Mouse).